Consider the following 431-residue polypeptide: Glutamate-1-semialdehyde 2,1-aminomutase (431 aa).

Lys-265 is subject to N6-(pyridoxal phosphate)lysine.

Belongs to the class-III pyridoxal-phosphate-dependent aminotransferase family. HemL subfamily. Homodimer. It depends on pyridoxal 5'-phosphate as a cofactor.

Its subcellular location is the cytoplasm. The catalysed reaction is (S)-4-amino-5-oxopentanoate = 5-aminolevulinate. Its pathway is porphyrin-containing compound metabolism; protoporphyrin-IX biosynthesis; 5-aminolevulinate from L-glutamyl-tRNA(Glu): step 2/2. The protein is Glutamate-1-semialdehyde 2,1-aminomutase of Aliivibrio fischeri (strain ATCC 700601 / ES114) (Vibrio fischeri).